A 94-amino-acid polypeptide reads, in one-letter code: Pyrimidine/purine nucleoside phosphorylase 2 (94 aa).

Belongs to the nucleoside phosphorylase PpnP family.

The enzyme catalyses a purine D-ribonucleoside + phosphate = a purine nucleobase + alpha-D-ribose 1-phosphate. The catalysed reaction is adenosine + phosphate = alpha-D-ribose 1-phosphate + adenine. It catalyses the reaction cytidine + phosphate = cytosine + alpha-D-ribose 1-phosphate. It carries out the reaction guanosine + phosphate = alpha-D-ribose 1-phosphate + guanine. The enzyme catalyses inosine + phosphate = alpha-D-ribose 1-phosphate + hypoxanthine. The catalysed reaction is thymidine + phosphate = 2-deoxy-alpha-D-ribose 1-phosphate + thymine. It catalyses the reaction uridine + phosphate = alpha-D-ribose 1-phosphate + uracil. It carries out the reaction xanthosine + phosphate = alpha-D-ribose 1-phosphate + xanthine. Catalyzes the phosphorolysis of diverse nucleosides, yielding D-ribose 1-phosphate and the respective free bases. Can use uridine, adenosine, guanosine, cytidine, thymidine, inosine and xanthosine as substrates. Also catalyzes the reverse reactions. In Psychrobacter cryohalolentis (strain ATCC BAA-1226 / DSM 17306 / VKM B-2378 / K5), this protein is Pyrimidine/purine nucleoside phosphorylase 2.